A 305-amino-acid chain; its full sequence is Acetylglutamate kinase (305 aa).

Substrate-binding positions include 75–76, R97, and N202; that span reads GG.

This sequence belongs to the acetylglutamate kinase family. ArgB subfamily.

The protein resides in the cytoplasm. It catalyses the reaction N-acetyl-L-glutamate + ATP = N-acetyl-L-glutamyl 5-phosphate + ADP. The protein operates within amino-acid biosynthesis; L-arginine biosynthesis; N(2)-acetyl-L-ornithine from L-glutamate: step 2/4. Catalyzes the ATP-dependent phosphorylation of N-acetyl-L-glutamate. The protein is Acetylglutamate kinase of Rhodospirillum centenum (strain ATCC 51521 / SW).